Here is a 135-residue protein sequence, read N- to C-terminus: ATP synthase epsilon chain (135 aa).

Belongs to the ATPase epsilon chain family. F-type ATPases have 2 components, CF(1) - the catalytic core - and CF(0) - the membrane proton channel. CF(1) has five subunits: alpha(3), beta(3), gamma(1), delta(1), epsilon(1). CF(0) has three main subunits: a, b and c.

It localises to the cell inner membrane. Functionally, produces ATP from ADP in the presence of a proton gradient across the membrane. This is ATP synthase epsilon chain from Granulibacter bethesdensis (strain ATCC BAA-1260 / CGDNIH1).